We begin with the raw amino-acid sequence, 94 residues long: Putative pterin-4-alpha-carbinolamine dehydratase (94 aa).

The protein belongs to the pterin-4-alpha-carbinolamine dehydratase family.

The enzyme catalyses (4aS,6R)-4a-hydroxy-L-erythro-5,6,7,8-tetrahydrobiopterin = (6R)-L-erythro-6,7-dihydrobiopterin + H2O. The protein is Putative pterin-4-alpha-carbinolamine dehydratase of Mycobacterium tuberculosis (strain ATCC 25177 / H37Ra).